A 136-amino-acid chain; its full sequence is uncharacterized protein (136 aa).

Residues 7-27 (ANVLAILLVSLFLINGLVFLS) form a helical membrane-spanning segment.

The protein localises to the membrane. This is an uncharacterized protein from Mycoplasma pneumoniae (strain ATCC 29342 / M129 / Subtype 1) (Mycoplasmoides pneumoniae).